We begin with the raw amino-acid sequence, 363 residues long: Galactokinase (363 aa).

16-19 (EHTD) serves as a coordination point for substrate. ATP is bound by residues serine 50 and 103–109 (GSGLSSS). Serine 109 and glutamate 141 together coordinate Mg(2+). Residue aspartate 153 is the Proton acceptor of the active site. Residue tyrosine 205 coordinates substrate.

Belongs to the GHMP kinase family. GalK subfamily.

Its subcellular location is the cytoplasm. The catalysed reaction is alpha-D-galactose + ATP = alpha-D-galactose 1-phosphate + ADP + H(+). It functions in the pathway carbohydrate metabolism; galactose metabolism. Catalyzes the transfer of the gamma-phosphate of ATP to D-galactose to form alpha-D-galactose-1-phosphate (Gal-1-P). The polypeptide is Galactokinase (Mycobacterium bovis (strain ATCC BAA-935 / AF2122/97)).